Here is a 127-residue protein sequence, read N- to C-terminus: MRLCICFVLLAVIVCASADNPFTRGGRFVLDAAGGAWDMLRAYRDMREANHIGADKYFHARGNYDAARRGPGGAWAARVISDARENWQGGVSGRGAEDTRADQEANAWGRNGGDPNRYRPPGLPSKY.

Positions 1–18 are cleaved as a signal peptide; that stretch reads MRLCICFVLLAVIVCASA. Positions 88–127 are disordered; that stretch reads QGGVSGRGAEDTRADQEANAWGRNGGDPNRYRPPGLPSKY.

It belongs to the SAA family. In terms of processing, this protein is the precursor of amyloid protein A, which is formed by the removal of approximately 3 residues from the C-terminal end. In terms of tissue distribution, expressed by the liver; secreted in plasma. Also present in the liver and lung irrespective of induction.

It is found in the secreted. Major acute phase reactant. Apolipoprotein of the HDL complex. This is Serum amyloid A protein from Anas platyrhynchos (Mallard).